The following is a 609-amino-acid chain: Proteasome-associated ATPase (609 aa).

Residues 1 to 25 form a disordered region; that stretch reads MADSERSEAFGTPDDTPLSSNDAAE. The stretch at 19 to 96 forms a coiled coil; that stretch reads SSNDAAELEQ…LREEVDRLGQ (78 aa). ATP is bound at residue 296–301; the sequence is GCGKTL. The segment at 608–609 is docks into pockets in the proteasome alpha-ring; it reads YL.

This sequence belongs to the AAA ATPase family. Homohexamer. Assembles into a hexameric ring structure that caps the 20S proteasome core. Strongly interacts with the prokaryotic ubiquitin-like protein Pup through a hydrophobic interface; the interacting region of ARC lies in its N-terminal coiled-coil domain. There is one Pup binding site per ARC hexamer ring. Upon ATP-binding, the C-terminus of ARC interacts with the alpha-rings of the proteasome core, possibly by binding to the intersubunit pockets.

Its pathway is protein degradation; proteasomal Pup-dependent pathway. Functionally, ATPase which is responsible for recognizing, binding, unfolding and translocation of pupylated proteins into the bacterial 20S proteasome core particle. May be essential for opening the gate of the 20S proteasome via an interaction with its C-terminus, thereby allowing substrate entry and access to the site of proteolysis. Thus, the C-termini of the proteasomal ATPase may function like a 'key in a lock' to induce gate opening and therefore regulate proteolysis. This Mycobacterium marinum (strain ATCC BAA-535 / M) protein is Proteasome-associated ATPase.